The primary structure comprises 457 residues: Cysteine desulfurase (457 aa).

Pyridoxal 5'-phosphate-binding residues include Ala127, Thr128, Gln235, Ser255, and His257. Lys258 bears the N6-(pyridoxal phosphate)lysine mark. Thr295 contacts pyridoxal 5'-phosphate. Cys381 acts as the Cysteine persulfide intermediate in catalysis. Position 381 (Cys381) interacts with [2Fe-2S] cluster. Cys381 lines the Zn(2+) pocket. Cys381 carries the cysteine persulfide modification.

It belongs to the class-V pyridoxal-phosphate-dependent aminotransferase family. NifS/IscS subfamily. As to quaternary structure, homodimer. Component of the mitochondrial core iron-sulfur cluster (ISC) complex composed of NFS1, LYRM4, NDUFAB1, ISCU, FXN, and FDX2; this complex is a heterohexamer containing two copies of each monomer. Component of cyteine desulfurase complex composed of NFS1, LYRM4 and NDUFAB1; this complex contributes to the activation of cysteine desulfurase activity and NFS1 stabilization. Interacts (homodimer form) with ISCU (D-state); each monomer interacts with the C-terminal regions of each NFS1 monomer. Interacts with HSPA9. Interacts (via homodimer form) with FDX2. Interacts (via homodimer form) with FXN. Interacts with LYRM4. Component of a complex composed of FXN, NFS1, LYRM4 and ISCU. Monomer. Homodimer. Oligomer. Interacts with ISCU. Component of the cysteine desulfurase complex composed of NFS1 and LYRM4; this complex contributes to the activation of cysteine desulfurase activity. Interacts with MOCS3. The cofactor is pyridoxal 5'-phosphate. N-gluconoylated. In terms of processing, cysteine persulfide intermediate is reduced by thiol-containing molecules like glutathione and L-cysteine. Persulfide reduction is a rate-limiting step of cysteine desulfurase catalytic cycle.

The protein localises to the mitochondrion. It localises to the cytoplasm. Its subcellular location is the nucleus. It is found in the cytoskeleton. The protein resides in the microtubule organizing center. The protein localises to the centrosome. The catalysed reaction is (sulfur carrier)-H + L-cysteine = (sulfur carrier)-SH + L-alanine. The enzyme catalyses L-cysteinyl-[cysteine desulfurase] + L-cysteine = S-sulfanyl-L-cysteinyl-[cysteine desulfurase] + L-alanine. Active only in complex with LYRM4. Cysteine desulfurase, of the core iron-sulfur cluster (ISC) assembly complex, that catalyzes the desulfuration of L-cysteine to L-alanine, as component of the cysteine desulfurase complex leading to the formation of a cysteine persulfide intermediate at the active site cysteine residue and participates in the [2Fe-2S] clusters assembly on the scaffolding protein ISCU. The persulfide is then transferred on the flexible Cys loop from the catalytic site of NFS1 to the surface of NFS1. After the NFS1-linked persulfide sulfur is transferred to one of the conserved Cys residues of the scaffold, a reaction assisted by FXN. The core iron-sulfur cluster (ISC) assembly complex is involved in the de novo synthesis of a [2Fe-2S] cluster, the first step of the mitochondrial iron-sulfur protein biogenesis. This process is initiated by the cysteine desulfurase complex (NFS1:LYRM4:NDUFAB1) that produces persulfide which is delivered on the scaffold protein ISCU in a FXN-dependent manner. Then this complex is stabilized by FDX2 which provides reducing equivalents to accomplish the [2Fe-2S] cluster assembly. Finally, the [2Fe-2S] cluster is transferred from ISCU to chaperone proteins, including HSCB, HSPA9 and GLRX5. Functionally, may catalyze the desulfuration of L-cysteine to L-alanine as component of the cysteine desulfurase complex (NFS1:LYRM4), leading to the formation of a cysteine persulfide intermediate. Acts as a sulfur donor for MOCS3 by transferring the sulfur of the cysteine persulfide intermediate on MOCS3. The sequence is that of Cysteine desulfurase from Pongo abelii (Sumatran orangutan).